The primary structure comprises 441 residues: MGISKDRIKFNVGGRLFETTATTLANAGRDSFFGALFDDEWNLSPLEDSILFVDRNSDCFAVLLDLLRTGDLNVPANIPERLLHREASFYGLLDHVRTAKWGPFDGNRLRLSDSVKGIAPGDGTAIRAGPDGGCCVAHGSVVHVFDWMLEEHSPINLDYQRVNDVGWIDSDNIVLSACEKLGRGDGGMGLFSSSSGDLRYKFQVCHENQVKSYTAGALSFSPDYEIFASCKGRSNEYGIGVWDQITGKQTDFFYESPGWSLGDADKLQWLNGKNCLLVATLFPRKDNCYISLLDFRDKNMVWSWSDIGSPMAIDEKRVRDAIAMEDSNSICVVNEFEDLGFIDLRMYGGSVRWSSRSKLMKSKMPDEPCYPKLALHEGQLFSSMNDSISVFCGPDWVLTSRLRRSYGGSICDFSIGGDRLFALHSEENVFDVWETPPCPII.

The BTB domain occupies 6–76; that stretch reads DRIKFNVGGR…LRTGDLNVPA (71 aa).

It participates in protein modification; protein ubiquitination. May act as a substrate-specific adapter of an E3 ubiquitin-protein ligase complex (CUL3-RBX1-BTB) which mediates the ubiquitination and subsequent proteasomal degradation of target proteins. This is BTB/POZ domain-containing protein At2g24240 from Arabidopsis thaliana (Mouse-ear cress).